The primary structure comprises 331 residues: Beta-ketoacyl-[acyl-carrier-protein] synthase III (331 aa).

Residues Cys-116 and His-256 contribute to the active site. The ACP-binding stretch occupies residues 257–261 (QANTR). The active site involves Asn-286.

This sequence belongs to the thiolase-like superfamily. FabH family. As to quaternary structure, homodimer.

The protein resides in the cytoplasm. It catalyses the reaction malonyl-[ACP] + acetyl-CoA + H(+) = 3-oxobutanoyl-[ACP] + CO2 + CoA. The protein operates within lipid metabolism; fatty acid biosynthesis. In terms of biological role, catalyzes the condensation reaction of fatty acid synthesis by the addition to an acyl acceptor of two carbons from malonyl-ACP. Catalyzes the first condensation reaction which initiates fatty acid synthesis and may therefore play a role in governing the total rate of fatty acid production. Possesses both acetoacetyl-ACP synthase and acetyl transacylase activities. Its substrate specificity determines the biosynthesis of branched-chain and/or straight-chain of fatty acids. The chain is Beta-ketoacyl-[acyl-carrier-protein] synthase III from Caldanaerobacter subterraneus subsp. tengcongensis (strain DSM 15242 / JCM 11007 / NBRC 100824 / MB4) (Thermoanaerobacter tengcongensis).